A 95-amino-acid polypeptide reads, in one-letter code: Co-chaperonin GroES (95 aa).

It belongs to the GroES chaperonin family. In terms of assembly, heptamer of 7 subunits arranged in a ring. Interacts with the chaperonin GroEL.

The protein localises to the cytoplasm. Functionally, together with the chaperonin GroEL, plays an essential role in assisting protein folding. The GroEL-GroES system forms a nano-cage that allows encapsulation of the non-native substrate proteins and provides a physical environment optimized to promote and accelerate protein folding. GroES binds to the apical surface of the GroEL ring, thereby capping the opening of the GroEL channel. The protein is Co-chaperonin GroES of Staphylococcus haemolyticus (strain JCSC1435).